The following is a 72-amino-acid chain: Hypotensin (72 aa).

The signal sequence occupies residues 1–24 (MKMMIAVFVSILLLMFSLSSTAMG). 2 consecutive propeptides follow at residues 25 to 35 (METEQQNMEER) and 61 to 72 (RFDPATFGENED).

This sequence belongs to the non-disulfide-bridged peptide (NDBP) superfamily. As to expression, expressed by the venom gland.

It localises to the secreted. In terms of biological role, potentiates the hypotensive action of bradykinin (BK) in normotensive rats, and induces a vasorelaxant effect in mesenteric artery rings that is induced by endothelium-dependent release of nitric oxide (NO). Does not inhibit angiotensin converting enzyme (ACE). Shows neither hemolytic activity nor cytotoxicity to normal and cancer cells. Shows moderate antimicrobial activity against the fungi Candida albicans and the filamentous fungus Trichophyton rubrum, as well as against the bacteria C.albicans (MIC=128 ug/mL), C.tropicalis (MIC=128 ug/mL) and Aspergillus flavus (MIC=128 ug/mL). Has no antimicrobial activity against S.aureus, S.epidermidis and P.aeruginosa. In Tityus stigmurus (Brazilian scorpion), this protein is Hypotensin.